Here is a 566-residue protein sequence, read N- to C-terminus: Glucose-6-phosphate isomerase, cytosolic (566 aa).

Glu-360 functions as the Proton donor in the catalytic mechanism. Catalysis depends on residues His-391 and Lys-516.

Belongs to the GPI family. As to quaternary structure, homodimer.

It localises to the cytoplasm. The catalysed reaction is alpha-D-glucose 6-phosphate = beta-D-fructose 6-phosphate. The protein operates within carbohydrate degradation; glycolysis; D-glyceraldehyde 3-phosphate and glycerone phosphate from D-glucose: step 2/4. This is Glucose-6-phosphate isomerase, cytosolic (PGIC) from Spinacia oleracea (Spinach).